Here is a 36-residue protein sequence, read N- to C-terminus: Photosystem I reaction center subunit VIII (36 aa).

Residues 8 to 28 traverse the membrane as a helical segment; the sequence is SIFVPLVGLVFPAIAMASLFL.

It belongs to the PsaI family.

The protein resides in the plastid. The protein localises to the chloroplast thylakoid membrane. In terms of biological role, may help in the organization of the PsaL subunit. The chain is Photosystem I reaction center subunit VIII from Solanum bulbocastanum (Wild potato).